Reading from the N-terminus, the 409-residue chain is Elongation factor Tu, cyanelle (409 aa).

The 205-residue stretch at 10–214 (KPHVNIGTIG…AVDEYIPTPE (205 aa)) folds into the tr-type G domain. Residues 19–26 (GHVDHGKT) are G1. GTP is bound at residue 19–26 (GHVDHGKT). Thr-26 is a binding site for Mg(2+). The G2 stretch occupies residues 60 to 64 (GITIN). The segment at 81–84 (DCPG) is G3. GTP contacts are provided by residues 81 to 85 (DCPGH) and 136 to 139 (NKED). The tract at residues 136-139 (NKED) is G4. The interval 174 to 176 (SAL) is G5.

This sequence belongs to the TRAFAC class translation factor GTPase superfamily. Classic translation factor GTPase family. EF-Tu/EF-1A subfamily.

The protein resides in the plastid. It localises to the cyanelle. It catalyses the reaction GTP + H2O = GDP + phosphate + H(+). Functionally, GTP hydrolase that promotes the GTP-dependent binding of aminoacyl-tRNA to the A-site of ribosomes during protein biosynthesis. The sequence is that of Elongation factor Tu, cyanelle (tufA) from Cyanophora paradoxa.